Here is a 335-residue protein sequence, read N- to C-terminus: MSISHFTALIWLGFLAVVALIALGYVLVQRSRHRQMLRFSNMEVLEKVAPSRPSPLRHAPIALMLVGLVFLTIAAAGPTSVQKVPRNRATVVLVMDVSLSMEATDVPPSRLEVAQQAGKEFVDGLTQGINLGFVTFAGTASVMQSPTTNREAVKAAIDNIKLAERTATGEGILTALQSIETLATVLGGAETPPPARIVLMSDGKQTVPDDKDVDNPRHAFTAARLAKSKGIPVSTISFGTEWGSVEIPDQDGQGGSQRVKVPVDNESLREIAKLSGGEFYTASSLEELTAVYDTLEEQIGYETTRGDASRPWLLLGMLVVAAGIVTGLLYRQRLP.

The next 2 membrane-spanning stretches (helical) occupy residues 8–28 (ALIW…YVLV) and 61–81 (IALM…PTSV). One can recognise a VWFA domain in the interval 90–295 (TVVLVMDVSL…EELTAVYDTL (206 aa)). The chain crosses the membrane as a helical span at residues 310–330 (RPWLLLGMLVVAAGIVTGLLY).

This sequence belongs to the UPF0353 family.

It localises to the cell membrane. The chain is UPF0353 protein NFA_34780 from Nocardia farcinica (strain IFM 10152).